The chain runs to 155 residues: Endoribonuclease YbeY (155 aa).

Zn(2+)-binding residues include His113, His117, and His123.

It belongs to the endoribonuclease YbeY family. Requires Zn(2+) as cofactor.

Its subcellular location is the cytoplasm. In terms of biological role, single strand-specific metallo-endoribonuclease involved in late-stage 70S ribosome quality control and in maturation of the 3' terminus of the 16S rRNA. This Ureaplasma parvum serovar 3 (strain ATCC 27815 / 27 / NCTC 11736) protein is Endoribonuclease YbeY.